The following is a 550-amino-acid chain: Chaperonin GroEL (550 aa).

Residues 29–32 (TAGP), Lys50, 86–90 (DGTTT), Gly417, and Asp499 contribute to the ATP site.

This sequence belongs to the chaperonin (HSP60) family. Forms a cylinder of 14 subunits composed of two heptameric rings stacked back-to-back. Interacts with the co-chaperonin GroES.

The protein localises to the cytoplasm. It carries out the reaction ATP + H2O + a folded polypeptide = ADP + phosphate + an unfolded polypeptide.. Its function is as follows. Together with its co-chaperonin GroES, plays an essential role in assisting protein folding. The GroEL-GroES system forms a nano-cage that allows encapsulation of the non-native substrate proteins and provides a physical environment optimized to promote and accelerate protein folding. The protein is Chaperonin GroEL of Ehrlichia chaffeensis.